The primary structure comprises 95 residues: Small ribosomal subunit protein bS18 (95 aa).

The protein belongs to the bacterial ribosomal protein bS18 family. Part of the 30S ribosomal subunit. Forms a tight heterodimer with protein bS6.

Functionally, binds as a heterodimer with protein bS6 to the central domain of the 16S rRNA, where it helps stabilize the platform of the 30S subunit. The polypeptide is Small ribosomal subunit protein bS18 (Rickettsia africae (strain ESF-5)).